A 324-amino-acid chain; its full sequence is Beta-ketoacyl-[acyl-carrier-protein] synthase III (324 aa).

Catalysis depends on residues C112 and H249. An ACP-binding region spans residues 250-254; it reads QANRR. Residue N279 is part of the active site.

This sequence belongs to the thiolase-like superfamily. FabH family. Homodimer.

The protein localises to the cytoplasm. The catalysed reaction is malonyl-[ACP] + acetyl-CoA + H(+) = 3-oxobutanoyl-[ACP] + CO2 + CoA. The protein operates within lipid metabolism; fatty acid biosynthesis. Functionally, catalyzes the condensation reaction of fatty acid synthesis by the addition to an acyl acceptor of two carbons from malonyl-ACP. Catalyzes the first condensation reaction which initiates fatty acid synthesis and may therefore play a role in governing the total rate of fatty acid production. Possesses both acetoacetyl-ACP synthase and acetyl transacylase activities. Its substrate specificity determines the biosynthesis of branched-chain and/or straight-chain of fatty acids. The protein is Beta-ketoacyl-[acyl-carrier-protein] synthase III of Streptococcus pyogenes serotype M2 (strain MGAS10270).